The following is a 286-amino-acid chain: MKKTIQRGLFTGALVLLTAMTSKPAHAAVNYQALVDADVKKFQGYFLKEFPGVKLEDFGDGVYALDEDSRKQWKEMEEFPPYELDVEAGKALFNKPFANGKSLGSCFSNGGAVRGMYPYFDEKRKEVITLEMAINECRVANGEKPYAPKKGDIARVSAYIASISRGQKIDVKVKSKAAYDAYMKGKEMFYAKRGQLNMSCSGCHMEYSGRHLRAEIISPALGHTTHFPVFRSKWGEIGTLHRRYAGCNENIGAKPFPAQSKEYRDLEFFQTVMSNGLKFNGPASRK.

A signal peptide spans 1–28; it reads MKKTIQRGLFTGALVLLTAMTSKPAHAA. Residues Cys-106 and Cys-137 are joined by a disulfide bond. Residues 180–286 enclose the Cytochrome c domain; sequence DAYMKGKEMF…LKFNGPASRK (107 aa). Heme contacts are provided by Cys-200 and His-204. Arg-243 contacts substrate. Cys-247 provides a ligand contact to heme. Residue Cys-247 is the Cysteine persulfide intermediate of the active site.

The protein belongs to the SoxA family. Heterodimer of SoxA and SoxX. The SoxAX complex interacts with CT1020, SoxAX-binding protein SaxB (SoxK); this interaction stimulates catalytic activity of the complex. Heme serves as cofactor. In terms of processing, cysteine persulfide at Cys-247.

It localises to the periplasm. It catalyses the reaction L-cysteinyl-[SoxY protein] + thiosulfate + 2 Fe(III)-[cytochrome c] = S-sulfosulfanyl-L-cysteinyl-[SoxY protein] + 2 Fe(II)-[cytochrome c] + 2 H(+). The enzyme catalyses S-sulfanyl-L-cysteinyl-[SoxY protein] + thiosulfate + 2 Fe(III)-[cytochrome c] = S-(2-sulfodisulfanyl)-L-cysteinyl-[SoxY protein] + 2 Fe(II)-[cytochrome c] + 2 H(+). Functionally, C-type monoheme cytochrome, which is part of the SoxAX cytochrome complex involved in sulfur oxidation. The SoxAX complex catalyzes the formation of a heterodisulfide bond between the conserved cysteine residue on a sulfur carrier SoxYZ complex subunit SoxY and thiosulfate or other inorganic sulfur substrates. This leads to the liberation of two electrons, which may be transferred from the SoxAX complex to another cytochrome c and which then may be used for reductive CO(2) fixation. This Chlorobaculum thiosulfatiphilum (Chlorobium limicola f.sp. thiosulfatophilum) protein is L-cysteine S-thiosulfotransferase subunit SoxA.